The sequence spans 307 residues: DNA damage tolerance protein rad31 (307 aa).

In terms of biological role, could be involved in a ubiquitin-related process important for DNA damage tolerance. Acts in a process which is defective in the checkpoint rad mutants and which involves hus5. This is DNA damage tolerance protein rad31 (rad31) from Schizosaccharomyces pombe (strain 972 / ATCC 24843) (Fission yeast).